The chain runs to 356 residues: UDP-N-acetylglucosamine--N-acetylmuramyl-(pentapeptide) pyrophosphoryl-undecaprenol N-acetylglucosamine transferase (356 aa).

UDP-N-acetyl-alpha-D-glucosamine-binding positions include 12 to 14, Asn-120, Arg-163, Ser-187, and Gln-286; that span reads SGG.

It belongs to the glycosyltransferase 28 family. MurG subfamily.

Its subcellular location is the cell inner membrane. It catalyses the reaction di-trans,octa-cis-undecaprenyl diphospho-N-acetyl-alpha-D-muramoyl-L-alanyl-D-glutamyl-meso-2,6-diaminopimeloyl-D-alanyl-D-alanine + UDP-N-acetyl-alpha-D-glucosamine = di-trans,octa-cis-undecaprenyl diphospho-[N-acetyl-alpha-D-glucosaminyl-(1-&gt;4)]-N-acetyl-alpha-D-muramoyl-L-alanyl-D-glutamyl-meso-2,6-diaminopimeloyl-D-alanyl-D-alanine + UDP + H(+). It participates in cell wall biogenesis; peptidoglycan biosynthesis. In terms of biological role, cell wall formation. Catalyzes the transfer of a GlcNAc subunit on undecaprenyl-pyrophosphoryl-MurNAc-pentapeptide (lipid intermediate I) to form undecaprenyl-pyrophosphoryl-MurNAc-(pentapeptide)GlcNAc (lipid intermediate II). This chain is UDP-N-acetylglucosamine--N-acetylmuramyl-(pentapeptide) pyrophosphoryl-undecaprenol N-acetylglucosamine transferase, found in Pelagibacter ubique (strain HTCC1062).